The sequence spans 272 residues: Phosphate import ATP-binding protein PstB (272 aa).

In terms of domain architecture, ABC transporter spans 26-267 (LEIRNLDLSY…PRKRKTEDYI (242 aa)). Residue 58-65 (GPSGCGKS) coordinates ATP.

It belongs to the ABC transporter superfamily. Phosphate importer (TC 3.A.1.7) family. The complex is composed of two ATP-binding proteins (PstB), two transmembrane proteins (PstC and PstA) and a solute-binding protein (PstS).

The protein localises to the cell inner membrane. The enzyme catalyses phosphate(out) + ATP + H2O = ADP + 2 phosphate(in) + H(+). In terms of biological role, part of the ABC transporter complex PstSACB involved in phosphate import. Responsible for energy coupling to the transport system. The protein is Phosphate import ATP-binding protein PstB of Shewanella denitrificans (strain OS217 / ATCC BAA-1090 / DSM 15013).